Here is a 477-residue protein sequence, read N- to C-terminus: Ribulose bisphosphate carboxylase large chain (477 aa).

Positions 1-2 are excised as a propeptide; sequence MS. Position 3 is an N-acetylproline (P3). Position 14 is an N6,N6,N6-trimethyllysine (K14). Substrate contacts are provided by N123 and T173. The active-site Proton acceptor is K175. Residue K177 participates in substrate binding. Mg(2+)-binding residues include K201, D203, and E204. K201 bears the N6-carboxylysine mark. H294 (proton acceptor) is an active-site residue. Substrate-binding residues include R295, H327, and S379.

Belongs to the RuBisCO large chain family. Type I subfamily. As to quaternary structure, heterohexadecamer of 8 large chains and 8 small chains; disulfide-linked. The disulfide link is formed within the large subunit homodimers. It depends on Mg(2+) as a cofactor. Post-translationally, the disulfide bond which can form in the large chain dimeric partners within the hexadecamer appears to be associated with oxidative stress and protein turnover.

The protein localises to the plastid. The protein resides in the chloroplast. It catalyses the reaction 2 (2R)-3-phosphoglycerate + 2 H(+) = D-ribulose 1,5-bisphosphate + CO2 + H2O. The enzyme catalyses D-ribulose 1,5-bisphosphate + O2 = 2-phosphoglycolate + (2R)-3-phosphoglycerate + 2 H(+). RuBisCO catalyzes two reactions: the carboxylation of D-ribulose 1,5-bisphosphate, the primary event in carbon dioxide fixation, as well as the oxidative fragmentation of the pentose substrate in the photorespiration process. Both reactions occur simultaneously and in competition at the same active site. In Nicotiana acuminata (Acuminate tobacco), this protein is Ribulose bisphosphate carboxylase large chain.